The primary structure comprises 520 residues: Transactivator/viroplasmin protein (520 aa).

The disordered stretch occupies residues 486 to 520 (VQDASADSGPKDGPPPTRSIVEKEDVPTTSSKQVD).

The protein belongs to the caulimoviridae viroplasmin family.

It localises to the host cytoplasm. In terms of biological role, enhances the ribosomal termination-reinitiation event leading to the translation of major open reading frames on the polycistronic viral RNAs. In Cauliflower mosaic virus (strain BBC) (CaMV), this protein is Transactivator/viroplasmin protein.